Consider the following 485-residue polypeptide: Ulvan lyase (485 aa).

A signal peptide spans 1-33; it reads MIRNDTMLKGQFVLKKTQIALSAALMGSVLLTG. Cys34 carries the N-palmitoyl cysteine lipid modification. The S-diacylglycerol cysteine moiety is linked to residue Cys34. Asn64 and Asn126 together coordinate substrate. The disordered stretch occupies residues 108 to 128; that stretch reads FKAGTSELGRRDGGKKFDNHG. A compositionally biased stretch (basic and acidic residues) spans 115 to 128; sequence LGRRDGGKKFDNHG. The Proton donor role is filled by His127. Substrate contacts are provided by Lys129 and His147. The active-site Proton acceptor is Tyr192. Arg208, His212, and Tyr250 together coordinate substrate. His212 contacts Zn(2+). Residues His268, Cys270, and His282 each coordinate Zn(2+). His282 provides a ligand contact to substrate.

The protein belongs to the polysaccharide lyase 25 family.

Its subcellular location is the cell membrane. Its function is as follows. Ulvan lyase involved in ulvan degradation. Ulvan is the main polysaccharide component of the Ulvales (green seaweed) cell wall. It is composed of disaccharide building blocks comprising 3-sulfated rhamnose (Rha3S) linked to D-glucuronic acid (GlcA), L-iduronic acid (IduA), or D-xylose (Xyl). Ulvan lyase catalyzes the endolytic cleavage of the glycosidic bond between Rha3S and the uronic acids GlcA or IduA, producing oligosaccharides that have unsaturated 4-deoxy-L-threo-hex-4-enopyranosiduronic acid (deltaUA) at the non-reducing end. This results eventually in the degradation of the ulvan polysaccharide into deltaUA-Rha3S disaccharides and deltaUA-Rha3S-Xyl-Rha3S tetrasaccharides. The polypeptide is Ulvan lyase (Alteromonas sp. (strain LOR)).